The primary structure comprises 273 residues: Formamidopyrimidine-DNA glycosylase (273 aa).

Catalysis depends on Pro-2, which acts as the Schiff-base intermediate with DNA. Residue Glu-3 is the Proton donor of the active site. Lys-58 serves as the catalytic Proton donor; for beta-elimination activity. His-92, Arg-111, and Lys-153 together coordinate DNA. An FPG-type zinc finger spans residues 238–272; sequence MVYARDGQECLSCSSSIIKTKHSGRSTFYCKSCQK. Arg-262 (proton donor; for delta-elimination activity) is an active-site residue.

It belongs to the FPG family. In terms of assembly, monomer. Requires Zn(2+) as cofactor.

It carries out the reaction Hydrolysis of DNA containing ring-opened 7-methylguanine residues, releasing 2,6-diamino-4-hydroxy-5-(N-methyl)formamidopyrimidine.. The catalysed reaction is 2'-deoxyribonucleotide-(2'-deoxyribose 5'-phosphate)-2'-deoxyribonucleotide-DNA = a 3'-end 2'-deoxyribonucleotide-(2,3-dehydro-2,3-deoxyribose 5'-phosphate)-DNA + a 5'-end 5'-phospho-2'-deoxyribonucleoside-DNA + H(+). Involved in base excision repair of DNA damaged by oxidation or by mutagenic agents. Acts as a DNA glycosylase that recognizes and removes damaged bases. Has a preference for oxidized purines, such as 7,8-dihydro-8-oxoguanine (8-oxoG). Has AP (apurinic/apyrimidinic) lyase activity and introduces nicks in the DNA strand. Cleaves the DNA backbone by beta-delta elimination to generate a single-strand break at the site of the removed base with both 3'- and 5'-phosphates. The protein is Formamidopyrimidine-DNA glycosylase of Rickettsia bellii (strain OSU 85-389).